The chain runs to 624 residues: Chaperone protein HtpG (624 aa).

Residues 1–336 (MKGQETRGFQ…SNDLPLNVSR (336 aa)) form an a; substrate-binding region. The b stretch occupies residues 337–552 (EILQDSTVTR…ADEMSTQMAK (216 aa)). The c stretch occupies residues 553–624 (LFAAAGQSVP…IRRMNQLLVS (72 aa)).

It belongs to the heat shock protein 90 family. As to quaternary structure, homodimer.

The protein localises to the cytoplasm. Molecular chaperone. Has ATPase activity. This chain is Chaperone protein HtpG, found in Salmonella paratyphi B (strain ATCC BAA-1250 / SPB7).